Reading from the N-terminus, the 579-residue chain is Extracellular serine/threonine protein kinase FAM20C (579 aa).

The Cytoplasmic segment spans residues 1 to 10; sequence MKMILVRRFR. The propeptide occupies 1 to 87; that stretch reads MKMILVRRFR…PNKHTLRILQ (87 aa). Residues 11 to 31 traverse the membrane as a helical; Signal-anchor for type II membrane protein segment; the sequence is VLILVVFLLACALHIAVDLLP. Topologically, residues 32 to 579 are lumenal; sequence KLDRRATRSS…ATEHRASTER (548 aa). Residues 38 to 79 are disordered; that stretch reads TRSSGEPGCSCAQPAAEAAGPGWAQARSRPGESAGGDAGWPN. Low complexity predominate over residues 49–63; the sequence is AQPAAEAAGPGWAQA. An N-linked (GlcNAc...) asparagine glycan is attached at Asn96. The segment at 104–155 is disordered; that stretch reads KLPSAAEPVDHAPRGQEPRSPPPRDPAHRPLLRDPGPRPRVPPPGPSGDGSL. 2 stretches are compositionally biased toward basic and acidic residues: residues 111-120 and 128-140; these read PVDHAPRGQE and DPAH…DPGP. Residues Gln264, Lys280, and Glu301 each coordinate ATP. Glu301 contributes to the Mn(2+) binding site. Residues 349–560 are kinase domain; it reads FVSPANNICF…AVRDCVEKDG (212 aa). 2 disulfide bridges follow: Cys357–Cys373 and Cys362–Cys366. An ATP-binding site is contributed by 384–387; sequence AAFL. Intrachain disulfides connect Cys421–Cys495 and Cys496–Cys555. Residue Asp453 is part of the active site. ATP-binding residues include Glu458 and Asp473. Asp473 lines the Mn(2+) pocket.

The protein belongs to the FAM20 family. In terms of assembly, homodimer; disulfide-linked. Interacts with FAM20A; probably forming a heterotetramer of 2 subunits of FAM20A and 2 subunits of FAM20C. Interacts with COPII components SEC23A and SEC24A; transport of FAM20C from the endoplasmic reticulum to the Golgi is likely to be mediated by COPII vesicles. Mn(2+) is required as a cofactor. Post-translationally, N-glycosylation is required for folding. In terms of processing, autophosphorylated. Propeptide cleavage by MBTPS1/S1P promotes FAM20C secretion and maximal kinase activity which is essential for efficient osteoblast differentiation and biomineralization. As to expression, in the mammary gland, expressed at higher levels in lactating mice than in virgin mice (at protein level). Highly expressed in the tooth. No expression in the dental pulp. At the secretory stage of amelogenesis, it is detected in the matrix of the enamel, in the ameloblasts, and within the cells adjoining the stratum intermedium (a tissue layer analogous to the stellate reticulum seen in the developing molar). Strong expression is observed in maturation stage ameloblasts and throughout the non-cornified layers of the gingival epithelium. Expressed at moderate levels in bone and at low levels in kidney, liver, brain and lung. Very low expression, if any, in spleen and skeletal muscle.

The protein localises to the golgi apparatus membrane. The protein resides in the secreted. Its subcellular location is the endoplasmic reticulum. The enzyme catalyses L-seryl-[protein] + ATP = O-phospho-L-seryl-[protein] + ADP + H(+). The catalysed reaction is L-threonyl-[protein] + ATP = O-phospho-L-threonyl-[protein] + ADP + H(+). With respect to regulation, serine/threonine protein kinase activity is increased upon interaction with FAM20A. Its function is as follows. Golgi serine/threonine protein kinase that phosphorylates secretory pathway proteins within Ser-x-Glu/pSer motifs and plays a key role in biomineralization of bones and teeth. Constitutes the main protein kinase for extracellular proteins, generating the majority of the extracellular phosphoproteome. Mainly phosphorylates proteins within the Ser-x-Glu/pSer motif, but also displays a broader substrate specificity. Phosphorylates ERO1A, enhancing its activity which is required to maintain endoplasmic reticulum redox homeostasis and for oxidative protein folding. During endoplasmic reticulum stress, phosphorylates P4HB/PDIA1 which induces a functional switch, causing P4HB to change from an oxidoreductase to a molecular chaperone. This is critical to maintain ER proteostasis and reduce cell death under ER stress. Phosphorylation of P4HB also promotes its interaction with ERN1, leading to reduced activity of ERN1, a key sensor for the endoplasmic reticulum unfolded protein response. Required for osteoblast differentiation and mineralization. Phosphorylates casein as well as a number of proteins involved in biomineralization such as AMELX, AMTN, ENAM and SPP1. In addition to its role in biomineralization, also plays a role in lipid homeostasis, wound healing and cell migration and adhesion. In Mus musculus (Mouse), this protein is Extracellular serine/threonine protein kinase FAM20C.